A 488-amino-acid chain; its full sequence is Bifunctional protein HldE (488 aa).

The interval 1–332 (MRESFLDTIQ…QELQSQQSAA (332 aa)) is ribokinase. 208–211 (NKRE) serves as a coordination point for ATP. The active site involves aspartate 277. A cytidylyltransferase region spans residues 359–488 (FTNGCFDLLH…TSNIIRKLAS (130 aa)).

In the N-terminal section; belongs to the carbohydrate kinase PfkB family. The protein in the C-terminal section; belongs to the cytidylyltransferase family. As to quaternary structure, homodimer.

It carries out the reaction D-glycero-beta-D-manno-heptose 7-phosphate + ATP = D-glycero-beta-D-manno-heptose 1,7-bisphosphate + ADP + H(+). The catalysed reaction is D-glycero-beta-D-manno-heptose 1-phosphate + ATP + H(+) = ADP-D-glycero-beta-D-manno-heptose + diphosphate. The protein operates within nucleotide-sugar biosynthesis; ADP-L-glycero-beta-D-manno-heptose biosynthesis; ADP-L-glycero-beta-D-manno-heptose from D-glycero-beta-D-manno-heptose 7-phosphate: step 1/4. It functions in the pathway nucleotide-sugar biosynthesis; ADP-L-glycero-beta-D-manno-heptose biosynthesis; ADP-L-glycero-beta-D-manno-heptose from D-glycero-beta-D-manno-heptose 7-phosphate: step 3/4. Catalyzes the phosphorylation of D-glycero-D-manno-heptose 7-phosphate at the C-1 position to selectively form D-glycero-beta-D-manno-heptose-1,7-bisphosphate. Functionally, catalyzes the ADP transfer from ATP to D-glycero-beta-D-manno-heptose 1-phosphate, yielding ADP-D-glycero-beta-D-manno-heptose. The polypeptide is Bifunctional protein HldE (Methylobacillus flagellatus (strain ATCC 51484 / DSM 6875 / VKM B-1610 / KT)).